Here is a 434-residue protein sequence, read N- to C-terminus: Pre-B-cell leukemia transcription factor 3 (434 aa).

The disordered stretch occupies residues 20–41 (SVQGGMALPPPPHGHEGADGDG). Positions 32–41 (HGHEGADGDG) are enriched in basic and acidic residues. Residues 41-234 (GRKQDIGDIL…VMILRSRFLD (194 aa)) enclose the PBC domain. The segment at 48-127 (DILHQIMTIT…EGVSGPEKGG (80 aa)) is PBC-A. Residues 130–234 (AAAAAAAAAS…VMILRSRFLD (105 aa)) are PBC-B. The segment at residues 235–297 (ARRKRRNFSK…NKRIRYKKNI (63 aa)) is a DNA-binding region (homeobox; TALE-type). Positions 326–341 (NQTNSPTTPNSGSSGS) are enriched in low complexity. 2 disordered regions span residues 326–349 (NQTN…NSGD) and 403–434 (LNAN…DTSN). A compositionally biased stretch (polar residues) spans 403–422 (LNANGGWQDATTPSSVTSPT).

It belongs to the TALE/PBX homeobox family. As to quaternary structure, interacts with PBXIP1. As to expression, ubiquitously expressed.

The protein resides in the nucleus. Functionally, transcriptional activator that binds the sequence 5'-ATCAATCAA-3'. This Homo sapiens (Human) protein is Pre-B-cell leukemia transcription factor 3 (PBX3).